Here is a 137-residue protein sequence, read N- to C-terminus: Mediator of RNA polymerase II transcription subunit 21 (137 aa).

Residues 37 to 56 form a disordered region; it reads PKDTIAPSKADQPPEVDTLP. Residues 87–130 adopt a coiled-coil conformation; the sequence is GLDNSEQDQLQSIKELEEELNVAEKQRQEAVKEKDEVLVKLDQT.

Belongs to the Mediator complex subunit 21 family. In terms of assembly, component of the Mediator complex.

It localises to the nucleus. In terms of biological role, component of the Mediator complex, a coactivator involved in the regulated transcription of nearly all RNA polymerase II-dependent genes. Mediator functions as a bridge to convey information from gene-specific regulatory proteins to the basal RNA polymerase II transcription machinery. Mediator is recruited to promoters by direct interactions with regulatory proteins and serves as a scaffold for the assembly of a functional preinitiation complex with RNA polymerase II and the general transcription factors. In Neurospora crassa (strain ATCC 24698 / 74-OR23-1A / CBS 708.71 / DSM 1257 / FGSC 987), this protein is Mediator of RNA polymerase II transcription subunit 21 (srb-7).